Consider the following 343-residue polypeptide: Proto-oncogene serine/threonine-protein kinase mos (343 aa).

Residues 63-339 (VCLMHRLGSG…LLQRDLKAFR (277 aa)) form the Protein kinase domain. Residues 69-77 (LGSGGFGSV) and Lys-90 contribute to the ATP site. Catalysis depends on Asp-198, which acts as the Proton acceptor.

It belongs to the protein kinase superfamily. Ser/Thr protein kinase family. In terms of assembly, interacts with MAP2K1/MEK1.

Its subcellular location is the cytoplasm. It catalyses the reaction L-seryl-[protein] + ATP = O-phospho-L-seryl-[protein] + ADP + H(+). It carries out the reaction L-threonyl-[protein] + ATP = O-phospho-L-threonyl-[protein] + ADP + H(+). Serine/threonine kinase involved in the regulation of MAPK signaling. Is an activator of the ERK1/2 signaling cascade playing an essential role in the stimulation of oocyte maturation. In Mus musculus (Mouse), this protein is Proto-oncogene serine/threonine-protein kinase mos.